The following is a 101-amino-acid chain: Feather keratin Cos2-3 (101 aa).

Ser-2 is modified (N-acetylserine).

Belongs to the avian keratin family. In terms of assembly, the avian keratins (F-ker, S-ker, C-ker and B-ker) are a complex mixture of very similar polypeptides.

The chain is Feather keratin Cos2-3 from Columba livia (Rock dove).